The following is a 196-amino-acid chain: MESRVVFESDLNLKATELRLGLPGTEEKEDNNLRTHAVLRNNKRQVRETSQDSVSISKASHHQQHVETVSAPPPKAKIVGWPPIRSYRKNSVQEGEGDGIFVKVSMDGAPYLRKVDLKVYGGYPELLKALETMFKLAIGEYSEREGYKGSEYAPTYEDKDGDWMLVGDVPWDMFVTSCKRLRIMKGSEARGLGCVV.

Residues 18 to 22 (LRLGL) carry the EAR-like (transcriptional repression) motif. The segment at 44-74 (RQVRETSQDSVSISKASHHQQHVETVSAPPP) is disordered. Residues 99 to 186 (GIFVKVSMDG…SCKRLRIMKG (88 aa)) form the PB1 domain.

The protein belongs to the Aux/IAA family. Homodimers and heterodimers.

The protein resides in the nucleus. Aux/IAA proteins are short-lived transcriptional factors that function as repressors of early auxin response genes at low auxin concentrations. Repression is thought to result from the interaction with auxin response factors (ARFs), proteins that bind to the auxin-responsive promoter element (AuxRE). Formation of heterodimers with ARF proteins may alter their ability to modulate early auxin response genes expression. The chain is Auxin-induced protein 22B (AUX22B) from Vigna radiata var. radiata (Mung bean).